The following is a 410-amino-acid chain: Histone-lysine N-methyltransferase SUV39H2 (410 aa).

The 59-residue stretch at 47-105 (YEVEYLCDYKVVKDMEYYLVKWKGWPDSTNTWEPLQNLKCPLLLQQFFNDKHNYLSQVK) folds into the Chromo domain. Positions 189–247 (FGCSCTDCFFEKCCPAEAGVLLAYNKNQQIKIPPGTPIYECNSRCQCGPDCPNRIVQKG) constitute a Pre-SET domain. C191, C193, C196, C201, C202, C229, C233, C235, and C239 together coordinate Zn(2+). The 124-residue stretch at 250-373 (YSLCIFRTSN…AGEELTFDYQ (124 aa)) folds into the SET domain. Residues 261 to 263 (CGW), Y304, and 330 to 331 (NH) each bind S-adenosyl-L-methionine. C333 is a binding site for Zn(2+). 3 positions are modified to phosphoserine: S381, S384, and S388. Residues 394-410 (ARTVCKCGAVTCRGYLN) enclose the Post-SET domain. Residues C398, C400, and C405 each contribute to the Zn(2+) site.

It belongs to the class V-like SAM-binding methyltransferase superfamily. Histone-lysine methyltransferase family. Suvar3-9 subfamily. Interacts with SMAD5. The large PER complex involved in the histone methylation is composed of at least PER2, CBX3, TRIM28, SUV39H1 and/or SUV39H2; CBX3 mediates the formation of the complex. In terms of processing, ubiquitinated by the DCX(DCAF13) E3 ubiquitin ligase complex, leading to its degradation.

The protein resides in the nucleus. The protein localises to the chromosome. It is found in the centromere. It catalyses the reaction L-lysyl(9)-[histone H3] + 3 S-adenosyl-L-methionine = N(6),N(6),N(6)-trimethyl-L-lysyl(9)-[histone H3] + 3 S-adenosyl-L-homocysteine + 3 H(+). Its function is as follows. Histone methyltransferase that specifically trimethylates 'Lys-9' of histone H3 using monomethylated H3 'Lys-9' as substrate. H3 'Lys-9' trimethylation represents a specific tag for epigenetic transcriptional repression by recruiting HP1 (CBX1, CBX3 and/or CBX5) proteins to methylated histones. Mainly functions in heterochromatin regions, thereby playing a central role in the establishment of constitutive heterochromatin at pericentric and telomere regions. H3 'Lys-9' trimethylation is also required to direct DNA methylation at pericentric repeats. SUV39H1 is targeted to histone H3 via its interaction with RB1 and is involved in many processes, such as cell cycle regulation, transcriptional repression and regulation of telomere length. May participate in regulation of higher-order chromatin organization during spermatogenesis. Recruited by the large PER complex to the E-box elements of the circadian target genes such as PER2 itself or PER1, contributes to the conversion of local chromatin to a heterochromatin-like repressive state through H3 'Lys-9' trimethylation. This is Histone-lysine N-methyltransferase SUV39H2 (SUV39H2) from Bos taurus (Bovine).